Reading from the N-terminus, the 157-residue chain is Phosphopantetheine adenylyltransferase (157 aa).

This sequence belongs to the eukaryotic CoaD family. Monomer.

It is found in the cytoplasm. The enzyme catalyses (R)-4'-phosphopantetheine + ATP + H(+) = 3'-dephospho-CoA + diphosphate. It functions in the pathway cofactor biosynthesis; coenzyme A biosynthesis. Functionally, reversibly transfers an adenylyl group from ATP to 4'-phosphopantetheine, yielding dephospho-CoA (dPCoA) and pyrophosphate. The sequence is that of Phosphopantetheine adenylyltransferase from Pyrococcus abyssi (strain GE5 / Orsay).